The sequence spans 185 residues: Probable DNA-directed RNA polymerase subunit delta (185 aa).

An HTH HARE-type domain is found at 14-81 (LSMIEVAHAI…GDNTWGLRAW (68 aa)). Residues 90 to 185 (ATVGENEEDE…DEEDEDEDDE (96 aa)) form a disordered region. Acidic residues-rich tracts occupy residues 117 to 167 (DTDD…DDGI) and 175 to 185 (HDEEDEDEDDE).

This sequence belongs to the RpoE family. RNAP is composed of a core of 2 alpha, a beta and a beta' subunits. The core is associated with a delta subunit and one of several sigma factors.

In terms of biological role, participates in both the initiation and recycling phases of transcription. In the presence of the delta subunit, RNAP displays an increased specificity of transcription, a decreased affinity for nucleic acids, and an increased efficiency of RNA synthesis because of enhanced recycling. The chain is Probable DNA-directed RNA polymerase subunit delta from Limosilactobacillus reuteri (strain DSM 20016) (Lactobacillus reuteri).